The chain runs to 401 residues: ADP-forming sulfoacetate-CoA ligase subunit SqwK (401 aa).

Residues 9 to 217 enclose the ATP-grasp domain; that stretch reads KTVFSEHKIP…DNSVFRQPRF (209 aa). 35–96 contacts ATP; that stretch reads KSVGFPSVVK…EEAVHIDKEI (62 aa). Residues Glu-185 and Asn-187 each contribute to the Mg(2+) site.

The protein belongs to the succinate/malate CoA ligase beta subunit family. Forms a complex with SqwL. The cofactor is Mg(2+).

The enzyme catalyses sulfoacetate + ATP + CoA = sulfoacetyl-CoA + ADP + phosphate. Its function is as follows. Part of a variant of the sulfo-TK pathway, a D-sulfoquinovose degradation pathway that produces sulfoacetate. Hydrolyzes sulfoacetyl-coenzyme A (sulfoacetyl-CoA) to produce sulfoacetate and CoA coupled with the phosphorylation of ADP to generate ATP. Cannot use succinate, acetate or 3-hydroxypropionate, and shows only residual activities with malonate and 3-sulfopropanoate. The chain is ADP-forming sulfoacetate-CoA ligase subunit SqwK from Acholeplasma sp.